We begin with the raw amino-acid sequence, 136 residues long: Peptide deformylase (136 aa).

Residues cysteine 85 and histidine 126 each coordinate Fe cation. Glutamate 127 is an active-site residue. Fe cation is bound at residue histidine 130.

This sequence belongs to the polypeptide deformylase family. Requires Fe(2+) as cofactor.

The enzyme catalyses N-terminal N-formyl-L-methionyl-[peptide] + H2O = N-terminal L-methionyl-[peptide] + formate. Functionally, removes the formyl group from the N-terminal Met of newly synthesized proteins. Requires at least a dipeptide for an efficient rate of reaction. N-terminal L-methionine is a prerequisite for activity but the enzyme has broad specificity at other positions. This chain is Peptide deformylase, found in Clostridium beijerinckii (strain ATCC 51743 / NCIMB 8052) (Clostridium acetobutylicum).